The chain runs to 586 residues: Actin-related protein 9 (586 aa).

The segment at 141–169 is disordered; the sequence is STPIVDKDADVDPLQRSTPDDTEPNSEEN.

It belongs to the actin family. ARP8 subfamily.

This Oryza sativa subsp. japonica (Rice) protein is Actin-related protein 9 (ARP9).